The following is a 611-amino-acid chain: tRNA uridine 5-carboxymethylaminomethyl modification enzyme MnmG (611 aa).

FAD-binding positions include 8-13, Val-120, and Ser-175; that span reads GAGHAG. Residue 268 to 282 participates in NAD(+) binding; the sequence is GPRYCPSIEDKIVRF. Gln-365 is an FAD binding site.

It belongs to the MnmG family. Homodimer. Heterotetramer of two MnmE and two MnmG subunits. It depends on FAD as a cofactor.

Its subcellular location is the cytoplasm. NAD-binding protein involved in the addition of a carboxymethylaminomethyl (cmnm) group at the wobble position (U34) of certain tRNAs, forming tRNA-cmnm(5)s(2)U34. The protein is tRNA uridine 5-carboxymethylaminomethyl modification enzyme MnmG of Mycoplasmoides gallisepticum (strain R(low / passage 15 / clone 2)) (Mycoplasma gallisepticum).